We begin with the raw amino-acid sequence, 181 residues long: Cytidylate kinase (181 aa).

Position 7–15 (7–15 (GPPGSGTTS)) interacts with ATP.

It belongs to the cytidylate kinase family. Type 2 subfamily.

The protein resides in the cytoplasm. It catalyses the reaction CMP + ATP = CDP + ADP. The enzyme catalyses dCMP + ATP = dCDP + ADP. This chain is Cytidylate kinase, found in Methanoculleus marisnigri (strain ATCC 35101 / DSM 1498 / JR1).